A 1076-amino-acid chain; its full sequence is Probable cellulose synthase A catalytic subunit 1 [UDP-forming] (1076 aa).

Over 1–267 the chain is Cytoplasmic; the sequence is MAANAGMVAG…SRIVPIPSNQ (267 aa). Zn(2+) is bound by residues Cys-41, Cys-44, Cys-60, Cys-63, Cys-68, Cys-71, Cys-83, and Cys-86. The RING-type; degenerate zinc-finger motif lies at 41 to 87; it reads CQICGDTVGVSATGDVFVACNECAFPVCRPCYEYERKEGNQCCPQCK. The tract at residues 119–179 is disordered; sequence HGNGKGPEWQ…HSIRSGTSSY (61 aa). The helical transmembrane segment at 268–288 threads the bilayer; it reads LNLYRIVIILRLIILMFFFQY. At 289 to 296 the chain is on the extracellular side; the sequence is RVTHPVRD. Residues 297 to 317 traverse the membrane as a helical segment; sequence AYGLWLVSVICEIWFALSWLL. Residues 318–851 are Cytoplasmic-facing; sequence DQFPKWYPIN…LLERLAYINT (534 aa). UDP-alpha-D-glucose-binding residues include Ser-356, Lys-362, Glu-363, and Asp-392. Residue Asp-392 is part of the active site. A coiled-coil region spans residues 446–473; sequence VKERRAMKREYEEFKVRINALVAKAQKV. Lys-533 contacts UDP-alpha-D-glucose. Mn(2+) is bound by residues Lys-534 and Asp-558. Asp-775 is a catalytic residue. A helical membrane pass occupies residues 852–872; the sequence is IVYPITSIPLIAYCVLPAICL. At 873–884 the chain is on the extracellular side; it reads LTNKFIIPEISN. A helical membrane pass occupies residues 885–905; the sequence is YAGMFFILLFASIFATGILEL. At 906 to 920 the chain is on the cytoplasmic side; it reads RWSGVGIEDWWRNEQ. A helical transmembrane segment spans residues 921 to 941; the sequence is FWVIGGTSAHLFAVFQGLLKV. At 942-971 the chain is on the extracellular side; the sequence is LAGIDTNFTVTSKASDEDGDFAELYVFKWT. Asn-948 carries an N-linked (GlcNAc...) asparagine glycan. A helical transmembrane segment spans residues 972–992; it reads SLLIPPTTVLVINLVGMVAGI. Residues 993–1003 lie on the Cytoplasmic side of the membrane; sequence SYAINSGYQSW. Residues 1004–1024 traverse the membrane as a helical segment; that stretch reads GPLFGKLFFSIWVILHLYPFL. At 1025 to 1033 the chain is on the extracellular side; that stretch reads KGLMGRQNR. The helical transmembrane segment at 1034-1054 threads the bilayer; sequence TPTIVIVWSILLASIFSLLWV. Residues 1055–1076 lie on the Cytoplasmic side of the membrane; that stretch reads KIDPFISPTQKAVALGQCGVNC.

This sequence belongs to the glycosyltransferase 2 family. Plant cellulose synthase subfamily. It depends on Zn(2+) as a cofactor. Mn(2+) is required as a cofactor.

It is found in the cell membrane. The enzyme catalyses [(1-&gt;4)-beta-D-glucosyl](n) + UDP-alpha-D-glucose = [(1-&gt;4)-beta-D-glucosyl](n+1) + UDP + H(+). Its pathway is glycan metabolism; plant cellulose biosynthesis. Its function is as follows. Catalytic subunit of cellulose synthase terminal complexes ('rosettes'), required for beta-1,4-glucan microfibril crystallization, a major mechanism of the cell wall formation. In Oryza sativa subsp. indica (Rice), this protein is Probable cellulose synthase A catalytic subunit 1 [UDP-forming] (CESA1).